A 259-amino-acid polypeptide reads, in one-letter code: 14-3-3-like protein (259 aa).

Positions 238–259 (MQDPAAGDDREGADMKVEDAEP) are disordered. A compositionally biased stretch (basic and acidic residues) spans 244-259 (GDDREGADMKVEDAEP).

The protein belongs to the 14-3-3 family.

The protein is 14-3-3-like protein of Chlamydomonas reinhardtii (Chlamydomonas smithii).